The following is a 164-amino-acid chain: Nucleotide-binding protein Mfla_1706 (164 aa).

This sequence belongs to the YajQ family.

Its function is as follows. Nucleotide-binding protein. In Methylobacillus flagellatus (strain ATCC 51484 / DSM 6875 / VKM B-1610 / KT), this protein is Nucleotide-binding protein Mfla_1706.